Here is a 322-residue protein sequence, read N- to C-terminus: CRISPR-associated endonuclease Cas1 (322 aa).

The Mn(2+) site is built by glutamate 149, histidine 214, and glutamate 229.

The protein belongs to the CRISPR-associated endonuclease Cas1 family. As to quaternary structure, homodimer, forms a heterotetramer with a Cas2 homodimer. Mg(2+) is required as a cofactor. Mn(2+) serves as cofactor.

Functionally, CRISPR (clustered regularly interspaced short palindromic repeat), is an adaptive immune system that provides protection against mobile genetic elements (viruses, transposable elements and conjugative plasmids). CRISPR clusters contain spacers, sequences complementary to antecedent mobile elements, and target invading nucleic acids. CRISPR clusters are transcribed and processed into CRISPR RNA (crRNA). Acts as a dsDNA endonuclease. Involved in the integration of spacer DNA into the CRISPR cassette. The polypeptide is CRISPR-associated endonuclease Cas1 (Methanocaldococcus jannaschii (strain ATCC 43067 / DSM 2661 / JAL-1 / JCM 10045 / NBRC 100440) (Methanococcus jannaschii)).